The sequence spans 458 residues: RuvB-like protein 1 (458 aa).

73-80 provides a ligand contact to ATP; it reads GPPGTGKT.

Belongs to the RuvB family. As to quaternary structure, interacts with FRI, and with FLX and FES1, two component of the transcription activator complex FRI-C. Interacts with the disease resistance genes RPM1 and RPP5.

It localises to the nucleus. The catalysed reaction is ATP + H2O = ADP + phosphate + H(+). Proposed core component of the chromatin remodeling INO80 complex which is involved in transcriptional regulation, DNA replication and probably DNA repair. Component of the NuA4 histone acetyltransferase complex which is involved in transcriptional activation of select genes principally by acetylation of nucleosomal histones H4 and H2A. Has single-stranded DNA-stimulated ATPase and ATP-dependent DNA helicase (3' to 5') activity suggesting a role in nuclear processes such as recombination and transcription. The sequence is that of RuvB-like protein 1 (RIN1) from Arabidopsis thaliana (Mouse-ear cress).